The following is a 507-amino-acid chain: Variant surface glycoprotein ILTAT 1.25 (507 aa).

An N-terminal signal peptide occupies residues 1-21 (MQSQQQPVFISIILLAINTDA). The segment covering 83–95 (EPEAAPKESRSDE) has biased composition (basic and acidic residues). The disordered stretch occupies residues 83 to 102 (EPEAAPKESRSDETPEACKA). N-linked (GlcNAc...) asparagine glycans are attached at residues N141 and N371. Residues 384–395 (PTKQPPAKAAAA) are compositionally biased toward low complexity. Residues 384–474 (PTKQPPAKAA…KKEEECKSPN (91 aa)) form a disordered region. The segment covering 396-420 (PEKKSNPQKDCNKNTKKRDCKEGDG) has biased composition (basic and acidic residues). Positions 444-455 (SAAGAGDAGASD) are enriched in low complexity. The segment covering 456–474 (TEAKKCSDKKKEEECKSPN) has biased composition (basic and acidic residues). The GPI-anchor amidated aspartate moiety is linked to residue D484. The propeptide at 485 to 507 (SSILANKQFALSVASAAFVALLF) is removed in mature form.

It localises to the cell membrane. Its function is as follows. VSG forms a coat on the surface of the parasite. The trypanosome evades the immune response of the host by expressing a series of antigenically distinct VSGs from an estimated 1000 VSG genes. This is Variant surface glycoprotein ILTAT 1.25 from Trypanosoma brucei brucei.